Reading from the N-terminus, the 219-residue chain is uncharacterized protein (219 aa).

This is an uncharacterized protein from Methanocaldococcus jannaschii (strain ATCC 43067 / DSM 2661 / JAL-1 / JCM 10045 / NBRC 100440) (Methanococcus jannaschii).